We begin with the raw amino-acid sequence, 396 residues long: 1-deoxy-D-xylulose 5-phosphate reductoisomerase (396 aa).

NADPH contacts are provided by Thr13, Gly14, Ser15, Ile16, and Asn127. Lys128 lines the 1-deoxy-D-xylulose 5-phosphate pocket. Glu129 is an NADPH binding site. Asp153 contributes to the Mn(2+) binding site. Residues Ser154, Glu155, Ser184, and His207 each contribute to the 1-deoxy-D-xylulose 5-phosphate site. Glu155 is a Mn(2+) binding site. Residue Gly213 coordinates NADPH. The 1-deoxy-D-xylulose 5-phosphate site is built by Ser220, Asn225, Lys226, and Glu229. Position 229 (Glu229) interacts with Mn(2+).

This sequence belongs to the DXR family. Mg(2+) is required as a cofactor. The cofactor is Mn(2+).

It catalyses the reaction 2-C-methyl-D-erythritol 4-phosphate + NADP(+) = 1-deoxy-D-xylulose 5-phosphate + NADPH + H(+). The protein operates within isoprenoid biosynthesis; isopentenyl diphosphate biosynthesis via DXP pathway; isopentenyl diphosphate from 1-deoxy-D-xylulose 5-phosphate: step 1/6. Catalyzes the NADPH-dependent rearrangement and reduction of 1-deoxy-D-xylulose-5-phosphate (DXP) to 2-C-methyl-D-erythritol 4-phosphate (MEP). The chain is 1-deoxy-D-xylulose 5-phosphate reductoisomerase from Pseudomonas paraeruginosa (strain DSM 24068 / PA7) (Pseudomonas aeruginosa (strain PA7)).